The chain runs to 568 residues: Glycine--tRNA ligase (568 aa).

Residues Arg97 and Glu163 each coordinate substrate. ATP is bound by residues 195 to 197, 205 to 210, 322 to 323, and 441 to 444; these read RNE, IRLREF, EC, and GIDR. Position 210-214 (210-214) interacts with substrate; that stretch reads FTQAE. 437–441 is a binding site for substrate; it reads EPSFG.

The protein belongs to the class-II aminoacyl-tRNA synthetase family.

Its subcellular location is the cytoplasm. The catalysed reaction is tRNA(Gly) + glycine + ATP = glycyl-tRNA(Gly) + AMP + diphosphate. In terms of biological role, catalyzes the attachment of glycine to tRNA(Gly). The sequence is that of Glycine--tRNA ligase from Pyrococcus furiosus (strain ATCC 43587 / DSM 3638 / JCM 8422 / Vc1).